The chain runs to 27 residues: Conotoxin Bt9.2 (27 aa).

Cystine bridges form between Cys2–Cys16, Cys6–Cys19, and Cys12–Cys24. Pro13 carries the post-translational modification 4-hydroxyproline.

Expressed by the venom duct.

The protein localises to the secreted. Functionally, probable neurotoxin that inhibits ion channels. This chain is Conotoxin Bt9.2, found in Conus betulinus (Beech cone).